A 508-amino-acid polypeptide reads, in one-letter code: PTS system mannitol-specific EIICB component (508 aa).

Residues Met-1 to Asn-30 lie on the Cytoplasmic side of the membrane. The PTS EIIC type-2 domain occupies Phe-19–Asp-351. Residues Ile-31–Asn-52 traverse the membrane as a helical segment. At Lys-53 to Ser-56 the chain is on the extracellular side. Residues Glu-57–Arg-77 form a helical membrane-spanning segment. Topologically, residues Leu-78–Phe-141 are cytoplasmic. A helical transmembrane segment spans residues Ser-142–Glu-163. Over Phe-164–Ala-172 the chain is Extracellular. The chain crosses the membrane as a helical span at residues Val-173–Lys-193. The Cytoplasmic portion of the chain corresponds to Ile-194–Ala-280. A helical membrane pass occupies residues Val-281–Lys-300. Residues Ser-301–Phe-320 lie on the Extracellular side of the membrane. A helical membrane pass occupies residues Leu-321 to Leu-342. Topologically, residues Lys-343 to Lys-508 are cytoplasmic. Residues Ala-355–Glu-400 are disordered. Residues Ser-367–Glu-392 show a composition bias toward low complexity. The 89-residue stretch at Asn-420–Lys-508 folds into the PTS EIIB type-2 domain. Residue Cys-426 is the Phosphocysteine intermediate; for EIIB activity of the active site. A Phosphocysteine; by EIIA modification is found at Cys-426.

In terms of assembly, homodimer.

It is found in the cell membrane. The catalysed reaction is D-mannitol(out) + N(pros)-phospho-L-histidyl-[protein] = D-mannitol 1-phosphate(in) + L-histidyl-[protein]. In terms of biological role, the phosphoenolpyruvate-dependent sugar phosphotransferase system (sugar PTS), a major carbohydrate active transport system, catalyzes the phosphorylation of incoming sugar substrates concomitantly with their translocation across the cell membrane. The enzyme II CmtAB PTS system is involved in D-mannitol transport. The protein is PTS system mannitol-specific EIICB component (mtlA) of Staphylococcus saprophyticus subsp. saprophyticus (strain ATCC 15305 / DSM 20229 / NCIMB 8711 / NCTC 7292 / S-41).